Consider the following 268-residue polypeptide: 4-hydroxy-tetrahydrodipicolinate reductase (268 aa).

NAD(+) is bound by residues 10 to 15 (GAGGRM), aspartate 36, 99 to 101 (GTT), and 123 to 126 (APNM). Residue histidine 156 is the Proton donor/acceptor of the active site. Histidine 157 provides a ligand contact to (S)-2,3,4,5-tetrahydrodipicolinate. Catalysis depends on lysine 160, which acts as the Proton donor. A (S)-2,3,4,5-tetrahydrodipicolinate-binding site is contributed by 166–167 (GT).

This sequence belongs to the DapB family.

The protein localises to the cytoplasm. The catalysed reaction is (S)-2,3,4,5-tetrahydrodipicolinate + NAD(+) + H2O = (2S,4S)-4-hydroxy-2,3,4,5-tetrahydrodipicolinate + NADH + H(+). The enzyme catalyses (S)-2,3,4,5-tetrahydrodipicolinate + NADP(+) + H2O = (2S,4S)-4-hydroxy-2,3,4,5-tetrahydrodipicolinate + NADPH + H(+). Its pathway is amino-acid biosynthesis; L-lysine biosynthesis via DAP pathway; (S)-tetrahydrodipicolinate from L-aspartate: step 4/4. Its function is as follows. Catalyzes the conversion of 4-hydroxy-tetrahydrodipicolinate (HTPA) to tetrahydrodipicolinate. This chain is 4-hydroxy-tetrahydrodipicolinate reductase, found in Dechloromonas aromatica (strain RCB).